The following is a 456-amino-acid chain: Dothistromin biosynthesis regulatory protein aflJ (456 aa).

Residues 74-143 (LARENQLLAC…PKPGYVAHSG (70 aa)) form the HTH iclR-type domain. The H-T-H motif DNA-binding region spans 104-123 (YSDVADLACVPVDQLRRIAR). Residues 290–300 (KLHNGLSTPPE) show a composition bias toward polar residues. Residues 290 to 314 (KLHNGLSTPPESDTGPAARAAKASE) are disordered.

It localises to the nucleus. Transcription coactivator involved in regulation of the dothistromin biosynthesis gene cluster with aflR. This is Dothistromin biosynthesis regulatory protein aflJ from Dothistroma septosporum (strain NZE10 / CBS 128990) (Red band needle blight fungus).